Here is a 165-residue protein sequence, read N- to C-terminus: Growth arrest and DNA damage-inducible protein GADD45 alpha (165 aa).

Thr-2 carries the phosphothreonine modification.

Belongs to the GADD45 family. Interacts with AURKA, PCNA, GADD45GIP1 and MAPK14.

The protein localises to the nucleus. Its function is as follows. Might affect PCNA interaction with some CDK (cell division protein kinase) complexes; stimulates DNA excision repair in vitro and inhibits entry of cells into S phase. In T-cells, functions as a regulator of p38 MAPKs by inhibiting p88 phosphorylation and activity. The protein is Growth arrest and DNA damage-inducible protein GADD45 alpha (GADD45A) of Cricetulus griseus (Chinese hamster).